The following is a 2883-amino-acid chain: Bifunctional DNA-directed RNA polymerase subunit beta-beta' (2883 aa).

Residues 1-1377 (MPTTLKSGNR…DVTVYGETEE (1377 aa)) are DNA-directed RNA polymerase subunit beta. Residues 1382 to 2883 (PMPIKEDDRP…IRIKEKTEGA (1502 aa)) are DNA-directed RNA polymerase subunit beta'. Zn(2+) is bound by residues cysteine 1447, cysteine 1449, cysteine 1462, and cysteine 1465. Aspartate 1846, aspartate 1848, and aspartate 1850 together coordinate Mg(2+). Zn(2+) is bound by residues cysteine 2176, cysteine 2250, cysteine 2257, and cysteine 2260.

This sequence in the N-terminal section; belongs to the RNA polymerase beta chain family. In the C-terminal section; belongs to the RNA polymerase beta' chain family. As to quaternary structure, the RNAP catalytic core consists of 2 alpha, 1 beta/beta' and 1 omega subunit. When a sigma factor is associated with the core the holoenzyme is formed, which can initiate transcription. Requires Mg(2+) as cofactor. The cofactor is Zn(2+).

It carries out the reaction RNA(n) + a ribonucleoside 5'-triphosphate = RNA(n+1) + diphosphate. In terms of biological role, DNA-dependent RNA polymerase catalyzes the transcription of DNA into RNA using the four ribonucleoside triphosphates as substrates. In Wolinella succinogenes (strain ATCC 29543 / DSM 1740 / CCUG 13145 / JCM 31913 / LMG 7466 / NCTC 11488 / FDC 602W) (Vibrio succinogenes), this protein is Bifunctional DNA-directed RNA polymerase subunit beta-beta' (rpoBC).